We begin with the raw amino-acid sequence, 470 residues long: MSQAYSSSQRVSSYRRTFGGAPSFPLGSPLSSPVFPRAGFGTKGSSSSVTSRVYQVSRTSGGAGGLGALRASRLGSTRVPSSYGAGELLDFSLADAVNQEFLTTRTNEKVELQELNDRFANYIEKVRFLEQQNAALAAEVNRLKGREPTRVAEIYEEELRELRRQVEVLTNQRARVDVERDNLLDDLQRLKAKLQEEIQLKEEAENNLAAFRADVDAATLARIDLERRIESLNEEIAFLKKVHEEEIRELQAQLQEQQVQVEMDMSKPDLTAALRDIRAQYETIAAKNISEAEEWYKSKVSDLTQAANKNNDALRQAKQEMMEYRHQIQSYTCEIDALKGTNDSLMRQMRELEDRFASEASGYQDNIARLEEEIRHLKDEMARHLREYQDLLNVKMALDVEIATYRKLLEGEESRINLPIQTFSALNFRETSPEQRGSEVHTKKTVMIKTIETRDGEVVSEATQQQHEVL.

Positions 2–108 (SQAYSSSQRV…QEFLTTRTNE (107 aa)) are head. Serine 7 carries the phosphoserine; by CDK1 modification. Serine 12 carries the post-translational modification Phosphoserine; by AURKB. Position 16 is an omega-N-methylarginine (arginine 16). At threonine 17 the chain carries Phosphothreonine; by AURKB and ROCK1. Residue serine 28 is modified to Phosphoserine; by CDK1. Serine 31 is subject to Phosphoserine. Serine 32 is subject to Phosphoserine; by CDK1. Residue arginine 37 is modified to Asymmetric dimethylarginine; alternate. Arginine 37 carries the post-translational modification Omega-N-methylarginine; alternate. A Phosphoserine modification is found at serine 45. Arginine 58 bears the ADP-ribosylarginine mark. Serine 60 bears the Phosphoserine; by AURKB mark. Arginine 70 is subject to Omega-N-methylarginine. Threonine 77 bears the Phosphothreonine; by ROCK1 mark. The residue at position 81 (serine 81) is a Phosphoserine. The IF rod domain maps to 108 to 416 (EKVELQELND…KLLEGEESRI (309 aa)). Residues 109 to 141 (KVELQELNDRFANYIEKVRFLEQQNAALAAEVN) form a coil 1A region. Positions 142-151 (RLKGREPTRV) are linker 1. A coil 1B region spans residues 152–252 (AEIYEEELRE…HEEEIRELQA (101 aa)). A linker 12 region spans residues 253–268 (QLQEQQVQVEMDMSKP). Residues 268 to 415 (PDLTAALRDI…RKLLEGEESR (148 aa)) form an interaction with NEB region. A coil 2A region spans residues 269–287 (DLTAALRDIRAQYETIAAK). The segment at 288-295 (NISEAEEW) is linker 2. Phosphoserine is present on residues serine 290, serine 358, serine 361, and serine 424. The coil 2B stretch occupies residues 296-412 (YKSKVSDLTQ…ATYRKLLEGE (117 aa)). Residues 413 to 470 (ESRINLPIQTFSALNFRETSPEQRGSEVHTKKTVMIKTIETRDGEVVSEATQQQHEVL) form a tail region. The interval 438 to 453 (SEVHTKKTVMIKTIET) is interaction with CRYAB.

This sequence belongs to the intermediate filament family. As to quaternary structure, homomer. Interacts with DST. Interacts with MTM1. Interacts with EPPK1; interaction is dependent of higher-order structure of intermediate filament. Interacts with CRYAB. Interacts with NEB (via nebulin repeats 160-164). Interacts (via rod region) with NEBL (via nebulin repeats 1-5). Interacts with ASB2; the interaction targets DES for proteasomal degradation. Interacts with PKP1. Interacts with FLII. In terms of processing, ADP-ribosylation prevents ability to form intermediate filaments. Phosphorylation at Ser-7, Ser-28 and Ser-32 by CDK1 and phosphorylation at Ser-60 by AURKB contribute to efficient separation of desmin intermediate filaments during mitosis. Post-translationally, ubiquitination by a SCF-like complex containing ASB2 leads to proteasomal degradation.

It localises to the cytoplasm. The protein localises to the myofibril. It is found in the sarcomere. Its subcellular location is the z line. The protein resides in the cell membrane. It localises to the sarcolemma. The protein localises to the nucleus. It is found in the cell tip. Its subcellular location is the nucleus envelope. Functionally, muscle-specific type III intermediate filament essential for proper muscular structure and function. Plays a crucial role in maintaining the structure of sarcomeres, inter-connecting the Z-disks and forming the myofibrils, linking them not only to the sarcolemmal cytoskeleton, but also to the nucleus and mitochondria, thus providing strength for the muscle fiber during activity. In adult striated muscle they form a fibrous network connecting myofibrils to each other and to the plasma membrane from the periphery of the Z-line structures. May act as a sarcomeric microtubule-anchoring protein: specifically associates with detyrosinated tubulin-alpha chains, leading to buckled microtubules and mechanical resistance to contraction. Required for nuclear membrane integrity, via anchoring at the cell tip and nuclear envelope, resulting in maintenance of microtubule-derived intracellular mechanical forces. Contributes to the transcriptional regulation of the NKX2-5 gene in cardiac progenitor cells during a short period of cardiomyogenesis and in cardiac side population stem cells in the adult. Plays a role in maintaining an optimal conformation of nebulette (NEB) on heart muscle sarcomeres to bind and recruit cardiac alpha-actin. The chain is Desmin (DES) from Bos taurus (Bovine).